A 643-amino-acid polypeptide reads, in one-letter code: Phosphatidylinositol-3,5-bisphosphate 3-phosphatase MTMR2 (643 aa).

The segment at 1–52 (MEKSSSCESLGAQLPAARLPSEDSLSSASTSHSENSVHTKSASAISSDSIST) is disordered. Residues serine 6 and serine 9 each carry the phosphoserine modification. The segment covering 23–40 (DSLSSASTSHSENSVHTK) has biased composition (polar residues). Low complexity predominate over residues 41-52 (SASAISSDSIST). Serine 58 is subject to Phosphoserine. The region spanning 68-139 (NKLAEMEEPA…GVISRVEKIG (72 aa)) is the GRAM domain. One can recognise a Myotubularin phosphatase domain in the interval 205-580 (GWKLYDPLLE…RHLELWVGYY (376 aa)). Positions 330, 355, and 356 each coordinate a 1,2-diacyl-sn-glycero-3-phospho-(1D-myo-inositol-3,5-bisphosphate). The a 1,2-diacyl-sn-glycero-3-phospho-(1D-myo-inositol-3-phosphate) site is built by asparagine 330, asparagine 355, and isoleucine 356. Catalysis depends on cysteine 417, which acts as the Phosphocysteine intermediate. The a 1,2-diacyl-sn-glycero-3-phospho-(1D-myo-inositol-3,5-bisphosphate) site is built by serine 418, aspartate 419, glycine 420, tryptophan 421, aspartate 422, arginine 423, arginine 459, and arginine 463. The a 1,2-diacyl-sn-glycero-3-phospho-(1D-myo-inositol-3-phosphate) site is built by serine 418, aspartate 419, glycine 420, tryptophan 421, aspartate 422, and arginine 423. An a 1,2-diacyl-sn-glycero-3-phospho-(1D-myo-inositol-3-phosphate)-binding site is contributed by arginine 463. The stretch at 593–627 (IHSRYKELLAKRAELQRKVEELQREISNRSTSSSE) forms a coiled coil. The disordered stretch occupies residues 614 to 643 (LQREISNRSTSSSERASSPAQCVTPVQTVV). Residues 620-631 (NRSTSSSERASS) show a composition bias toward low complexity. Residues 632-643 (PAQCVTPVQTVV) are compositionally biased toward polar residues.

Belongs to the protein-tyrosine phosphatase family. Non-receptor class myotubularin subfamily. Homodimer (via coiled-coil domain). Heterotetramer consisting of one MTMR2 dimer and one SBF2/MTMR13 dimer; specifically in peripheral nerves stabilizes SBF2/MTMR13 at the membranes and increases MTMR2 catalytic activity towards phosphatidylinositol 3,5-bisphosphate and to a lesser extent towards phosphatidylinositol 3-phosphate. Heterodimer with SBF1/MTMR5; acts as an adapter for the phosphatase MTMR2 to regulate MTMR2 catalytic activity and subcellular location. Heterodimer with MTMR12. Phosphorylation at Ser-58 decreases MTMR2 localization to endocytic vesicular structures. Expressed in sciatic nerve and in Schwann cells (at protein level). Detected in adult dorsal root ganglia, neurons of the central nervous system, motor neurons, cell soma and neurites of sensory neurons, olfactory bulb, cerebellum and hippocampus.

It localises to the cytoplasm. It is found in the early endosome membrane. The protein resides in the perinuclear region. The protein localises to the cell projection. Its subcellular location is the axon. It localises to the endosome membrane. The catalysed reaction is a 1,2-diacyl-sn-glycero-3-phospho-(1D-myo-inositol-3,5-bisphosphate) + H2O = a 1,2-diacyl-sn-glycero-3-phospho-(1D-myo-inositol-5-phosphate) + phosphate. It carries out the reaction a 1,2-diacyl-sn-glycero-3-phospho-(1D-myo-inositol-3-phosphate) + H2O = a 1,2-diacyl-sn-glycero-3-phospho-(1D-myo-inositol) + phosphate. The enzyme catalyses 1,2-dioctanoyl-sn-glycero-3-phospho-(1-D-myo-inositol-3-phosphate) + H2O = 1,2-dioctanoyl-sn-glycero-3-phospho-(1D-myo-inositol) + phosphate. It catalyses the reaction 1,2-dioctanoyl-sn-glycero-3-phospho-(1D-myo-inositol-3,5-bisphosphate) + H2O = 1,2-dioctanoyl-sn-glycero-3-phospho-(1D-myo-inositol-5-phosphate) + phosphate. Its function is as follows. Lipid phosphatase that specifically dephosphorylates the D-3 position of phosphatidylinositol 3-phosphate and phosphatidylinositol 3,5-bisphosphate, generating phosphatidylinositol and phosphatidylinositol 5-phosphate. Regulates the level of these phosphoinositides critical for various biological processes including autophagy initiation and autophagosome maturation. The protein is Phosphatidylinositol-3,5-bisphosphate 3-phosphatase MTMR2 of Mus musculus (Mouse).